The primary structure comprises 518 residues: MSILSVKDLSHGFGDRAIFNNVSFRLLKGEHVGLIGANGEGKSTFMNIITGKLEPDEGKVEWSKNVRVGYLDQHTVLEKGKSIRDVLKDAFHYLFAMEEEMNEIYNKMGEADPDELEKLLEEVGVIQDALTNNDFYVIDSKVEEIARGLGLSDIGLERDVTDLSGGQRTKVLLAKLLLEKPEILLLDEPTNYLDEQHIEWLKRYLQEYENAFILISHDIPFLNSVINLIYHVENQELTRYVGDYHQFMEVYEVKKQQLEAAYKKQQQEVAELKDFVARNKARVSTRNMAMSRQKKLDKMDMIELAAEKPKPEFHFKPARTSGKLIFETKDLVIGYDSPLSRPLNLRMERGQKIALYGANGIGKTTLLKSLLGEIQPLEGSVERGEHIYTGYFEQEVKETNNNTCIEEVWSEFPSYTQYEIRAALAKCGLTTKHIESRVSVLSGGEKAKVRLCKLINSETNLLVLDEPTNHLDADAKEELKRALKEYKGSILLISHEPDFYMDIATETWNCESWTTKVL.

ABC transporter domains follow at residues 4–260 and 324–518; these read LSVK…QLEA and LIFE…TKVL. Residues 36-43 and 357-364 contribute to the ATP site; these read GANGEGKS and GANGIGKT.

This sequence belongs to the ABC transporter superfamily.

This is an uncharacterized protein from Bacillus subtilis (strain 168).